The following is a 1142-amino-acid chain: Ribonucleoside-diphosphate reductase large subunit (1142 aa).

Residues 1-33 (MANRPAASALAGARSPSERQEPREPEVAPPGGD) are disordered. Residues 16–26 (PSERQEPREPE) are compositionally biased toward basic and acidic residues. The RIP homotypic interaction motif (RHIM) motif lies at 55–75 (AYRISDSSFVQCGSNCSMIID). The disordered stretch occupies residues 118–322 (SGPSATTSVG…TDPGYPVPLE (205 aa)). Positions 119 to 132 (GPSATTSVGTQTSG) are enriched in polar residues. A compositionally biased stretch (pro residues) spans 141–159 (TPEPQGPQAVPPPPPPPFP). The segment covering 164 to 179 (CCARRDARGGAEKDVG) has biased composition (basic and acidic residues). A compositionally biased stretch (acidic residues) spans 192 to 205 (SETEDSDSSDEDTG). Over residues 277–303 (GSATDPRASADSDSAAHAAAPQADVAP) the composition is skewed to low complexity. The interval 294–400 (AAAPQADVAP…CLDLPPVPPN (107 aa)) is alpha-crystallin domain. Substrate is bound by residues Thr-571, 586-587 (SC), Gly-617, 796-800 (NLCTE), and 973-977 (PTAAS). An intrachain disulfide couples Cys-587 to Cys-813. Asn-796 acts as the Proton acceptor in catalysis. The Cysteine radical intermediate role is filled by Cys-798. The Proton acceptor role is filled by Glu-800.

This sequence belongs to the ribonucleoside diphosphate reductase large chain family. As to quaternary structure, heterotetramer composed of a homodimer of the large subunit (R1) and a homodimer of the small subunit (R2). Larger multisubunit protein complex are also active, composed of (R1)n(R2)n. May self-assemble (via RIP homotypic interaction motif/RHIM) into homomeric fibrillar amyloid structures. Interacts (via RHIM) with human RIPK1 (via RHIM). Interacts (via RHIM) with human RIPK3 (via RHIM). May interact (via RHIM) with human ZBP1 (via RHIM). Interacts (via C-terminus) with host CASP8.

Its subcellular location is the host cell membrane. It is found in the host endosome membrane. The catalysed reaction is a 2'-deoxyribonucleoside 5'-diphosphate + [thioredoxin]-disulfide + H2O = a ribonucleoside 5'-diphosphate + [thioredoxin]-dithiol. Its function is as follows. Ribonucleoside-diphosphate reductase holoenzyme that provides the precursors necessary for viral DNA synthesis. Allows virus growth in non-dividing cells, as well as reactivation from latency in infected hosts. Catalyzes the biosynthesis of deoxyribonucleotides from the corresponding ribonucleotides. The N-terminal region confers antiapoptotic activity in differentiated cells such as neurons and is important for viral reactivation to increase neural survivability. Prevents host necroptosis by targeting host RIPK1 and RIPK3, thereby hampering the formation of necroptotic RIPK1-RIPK3 complexes. May form hetero-amyloid structures with host proteins RIPK3 or ZBP1, thereby preventing RIPK3- and ZBP1-mediated necroptosis. In addition, inhibits extrinsic apoptosis by targeting host CASP8. In Homo sapiens (Human), this protein is Ribonucleoside-diphosphate reductase large subunit.